We begin with the raw amino-acid sequence, 595 residues long: Putative capsid protein V20 (595 aa).

Its subcellular location is the virion. Functionally, may self assemble to form an icosahedral capsid. Most abundant protein in the virion. This Sputnik virophage protein is Putative capsid protein V20.